The primary structure comprises 149 residues: D-aminoacyl-tRNA deacylase (149 aa).

The short motif at G137–P138 is the Gly-cisPro motif, important for rejection of L-amino acids element.

This sequence belongs to the DTD family. In terms of assembly, homodimer.

Its subcellular location is the cytoplasm. The enzyme catalyses glycyl-tRNA(Ala) + H2O = tRNA(Ala) + glycine + H(+). It carries out the reaction a D-aminoacyl-tRNA + H2O = a tRNA + a D-alpha-amino acid + H(+). Its function is as follows. An aminoacyl-tRNA editing enzyme that deacylates mischarged D-aminoacyl-tRNAs. Also deacylates mischarged glycyl-tRNA(Ala), protecting cells against glycine mischarging by AlaRS. Acts via tRNA-based rather than protein-based catalysis; rejects L-amino acids rather than detecting D-amino acids in the active site. By recycling D-aminoacyl-tRNA to D-amino acids and free tRNA molecules, this enzyme counteracts the toxicity associated with the formation of D-aminoacyl-tRNA entities in vivo and helps enforce protein L-homochirality. This Clostridioides difficile (strain 630) (Peptoclostridium difficile) protein is D-aminoacyl-tRNA deacylase.